Here is a 67-residue protein sequence, read N- to C-terminus: Sec-independent protein translocase protein TatA (67 aa).

A helical membrane pass occupies residues 1 to 21; it reads MFGLGGQELVLILLIVLLLFG.

The protein belongs to the TatA/E family. In terms of assembly, forms a complex with TatC.

It localises to the cell inner membrane. In terms of biological role, part of the twin-arginine translocation (Tat) system that transports large folded proteins containing a characteristic twin-arginine motif in their signal peptide across membranes. TatA could form the protein-conducting channel of the Tat system. The protein is Sec-independent protein translocase protein TatA of Chlorobaculum tepidum (strain ATCC 49652 / DSM 12025 / NBRC 103806 / TLS) (Chlorobium tepidum).